Here is a 55-residue protein sequence, read N- to C-terminus: Large ribosomal subunit protein bL33 (55 aa).

The protein belongs to the bacterial ribosomal protein bL33 family.

This chain is Large ribosomal subunit protein bL33, found in Proteus mirabilis (strain HI4320).